A 624-amino-acid polypeptide reads, in one-letter code: Polycystin-2-like protein 2 (624 aa).

Residues 1–31 (MAEASRWHRGGASKHKLHYRKEVEITTTLQE) lie on the Cytoplasmic side of the membrane. The helical transmembrane segment at 32-52 (LLLYFIFLINLCILTFGMVNP) threads the bilayer. Topologically, residues 53–276 (HMYYLNKVMS…YSVKLLRYVS (224 aa)) are extracellular. N-linked (GlcNAc...) asparagine glycosylation is found at asparagine 115 and asparagine 138. The helical transmembrane segment at 277–297 (YYDYFIASCEITFCIFLFVFT) threads the bilayer. Over 298 to 314 (TQEVKKIKEFKSAYFKS) the chain is Cytoplasmic. Residues 315-335 (IWNWLELLLLLLCFVAVSFNT) form a helical membrane-spanning segment. At 336 to 360 (YYNVQIFLLLGQLLKSTEKYSDFYF) the chain is on the extracellular side. The chain crosses the membrane as a helical span at residues 361 to 381 (LACWHIYYNNIIAITIFFAWI). Residues 382 to 406 (KIFKFISFNKTMSQLSSTLSRCVKD) are Cytoplasmic-facing. The helical transmembrane segment at 407 to 427 (IVGFAIMFFIIFFAYAQLGFL) threads the bilayer. Residues 428-469 (VFGSQVDDFSTFQNSIFAQFRIVLGDFNFAGIQQANPILGPI) are Extracellular-facing. Residues 470 to 490 (YFITFIFFVFFVLLNMFLAII) traverse the membrane as a helical segment. Over 491–624 (NDTYSEVKAD…NQVVRKVSAL (134 aa)) the chain is Cytoplasmic. A coiled-coil region spans residues 556 to 576 (ENEIQNAEQMKKWKERLEKKY).

It belongs to the polycystin family. In terms of assembly, interacts with TRPC1 and TRPC5. Expressed only in testis. Expressed also in brain and kidney. As to expression, expressed only in transformed lymphoblasts.

It is found in the membrane. Functionally, exhibits a lower single conductance but no spontaneous channel activity. May function as a regulator of calcium channels or a channel component involving Ca2(+) homeostasis. In Homo sapiens (Human), this protein is Polycystin-2-like protein 2.